The chain runs to 597 residues: Elongation factor 4 (597 aa).

In terms of domain architecture, tr-type G spans 2–184; the sequence is KHIRNFSIIA…NIVSAIPAPE (183 aa). Residues 14-19 and 131-134 each bind GTP; these read DHGKST and NKID.

This sequence belongs to the TRAFAC class translation factor GTPase superfamily. Classic translation factor GTPase family. LepA subfamily.

Its subcellular location is the cell inner membrane. The catalysed reaction is GTP + H2O = GDP + phosphate + H(+). In terms of biological role, required for accurate and efficient protein synthesis under certain stress conditions. May act as a fidelity factor of the translation reaction, by catalyzing a one-codon backward translocation of tRNAs on improperly translocated ribosomes. Back-translocation proceeds from a post-translocation (POST) complex to a pre-translocation (PRE) complex, thus giving elongation factor G a second chance to translocate the tRNAs correctly. Binds to ribosomes in a GTP-dependent manner. The chain is Elongation factor 4 from Vibrio parahaemolyticus serotype O3:K6 (strain RIMD 2210633).